Reading from the N-terminus, the 229-residue chain is Probable transmembrane reductase CYB561D1 (229 aa).

Residues methionine 1–arginine 24 are Cytoplasmic-facing. In terms of domain architecture, Cytochrome b561 spans leucine 22–arginine 224. The helical transmembrane segment at glycine 25–serine 45 threads the bilayer. The Lumenal segment spans residues arginine 46 to serine 53. The chain crosses the membrane as a helical span at residues tryptophan 54 to phenylalanine 74. Histidine 55 contributes to the heme b binding site. Topologically, residues serine 75 to arginine 91 are cytoplasmic. A helical transmembrane segment spans residues leucine 92–isoleucine 112. The heme b site is built by histidine 93 and histidine 127. Topologically, residues serine 113 to serine 128 are lumenal. Residues tryptophan 129–leucine 149 traverse the membrane as a helical segment. Over cysteine 150 to cysteine 169 the chain is Cytoplasmic. Histidine 166 is a binding site for heme b. A helical membrane pass occupies residues glycine 170–phenylalanine 190. The Lumenal portion of the chain corresponds to glutamine 191 to glutamine 193. Residues isoleucine 194 to methionine 214 traverse the membrane as a helical segment. The Cytoplasmic portion of the chain corresponds to histidine 215–methionine 229.

Requires heme b as cofactor.

The protein resides in the membrane. The enzyme catalyses monodehydro-L-ascorbate radical(out) + L-ascorbate(in) = monodehydro-L-ascorbate radical(in) + L-ascorbate(out). It catalyses the reaction Fe(3+)(out) + L-ascorbate(in) = monodehydro-L-ascorbate radical(in) + Fe(2+)(out) + H(+). Functionally, probable transmembrane reductase that may use ascorbate as an electron donor and transfer electrons across membranes to reduce monodehydro-L-ascorbate radical and iron cations Fe(3+) in another cellular compartment. This is Probable transmembrane reductase CYB561D1 from Homo sapiens (Human).